A 370-amino-acid polypeptide reads, in one-letter code: MANKNFSLTVYDSEYMETNNKIYQENMEKKIRTISEFPDKVLLKILSLLPSKDVVATGVLSKRWRSLWKDVKTFRTSSVESLQLKINPSATNKDIQSLVNMAVARSMRELRIEMICKNFELPKSFYMFSQLETVILDKVSLMDPPPDVHLPCLKRLHLLSVNSLTNVMIFTIDVPTLRILSIDNTSGKSRPKGVHGFVINTPSLSVNVVFDNPYKFLAPLGSTQYLSLCSVTSHTTYRPAVFSFIFLDHLELCLCSAEQWNLLTRILNYAPRLRVLQLKLYHKHCVKDTKNLMGNQPDLIPKSLSSHLEILEWRQYNDTAQEREAAKYILANASGLRKATFYTESTEKHGMLKEVRMCGQRFKNMSACVK.

Residues 31 to 77 (IRTISEFPDKVLLKILSLLPSKDVVATGVLSKRWRSLWKDVKTFRTS) enclose the F-box domain. The FBD domain maps to 292–343 (LMGNQPDLIPKSLSSHLEILEWRQYNDTAQEREAAKYILANASGLRKATFYT).

The sequence is that of Putative FBD-associated F-box protein At1g50980 from Arabidopsis thaliana (Mouse-ear cress).